Reading from the N-terminus, the 259-residue chain is HTH-type transcriptional regulator TtgV (259 aa).

The HTH iclR-type domain maps to 14 to 76 (IQVIARAASI…GPAGGFRLGP (63 aa)). A DNA-binding region (H-T-H motif) is located at residues 36-59 (LAAIAQLVGLPRSTVQRIINALEE). The region spanning 89–253 (ILSLVKPYLR…KLNIERAIGR (165 aa)) is the IclR-ED domain.

Its function is as follows. Represses the expression of the ttgGHI and ttgVW operons. Binds to the ttgGHI / ttgVW intergenic region, probably preventing binding of RNA polymerase; ttgV dissociates from this region in the presence of 1-hexanol. The chain is HTH-type transcriptional regulator TtgV (ttgV) from Pseudomonas putida (strain DOT-T1E).